The chain runs to 145 residues: 3-hydroxyacyl-[acyl-carrier-protein] dehydratase FabZ (145 aa).

The active site involves His49.

This sequence belongs to the thioester dehydratase family. FabZ subfamily.

The protein localises to the cytoplasm. The enzyme catalyses a (3R)-hydroxyacyl-[ACP] = a (2E)-enoyl-[ACP] + H2O. In terms of biological role, involved in unsaturated fatty acids biosynthesis. Catalyzes the dehydration of short chain beta-hydroxyacyl-ACPs and long chain saturated and unsaturated beta-hydroxyacyl-ACPs. This Rickettsia bellii (strain RML369-C) protein is 3-hydroxyacyl-[acyl-carrier-protein] dehydratase FabZ.